Consider the following 391-residue polypeptide: uncharacterized protein (391 aa).

Positions 85–314 constitute an OBG-type G domain; the sequence is ATAAFVGFPS…LKEKIYEKLG (230 aa). GTP contacts are provided by residues 91 to 98, 137 to 141, and 267 to 270; these read GFPSVGKS, DAPGI, and NKID. Residues 314-389 enclose the TGS domain; sequence GFIKIYLKPQ…EDGDILTIVI (76 aa).

The protein belongs to the TRAFAC class OBG-HflX-like GTPase superfamily. OBG GTPase family.

This is an uncharacterized protein from Methanocaldococcus jannaschii (strain ATCC 43067 / DSM 2661 / JAL-1 / JCM 10045 / NBRC 100440) (Methanococcus jannaschii).